A 214-amino-acid chain; its full sequence is Ribosomal RNA small subunit methyltransferase G (214 aa).

S-adenosyl-L-methionine is bound by residues Gly-81, Met-86, 132 to 133 (VE), and Arg-147.

The protein belongs to the methyltransferase superfamily. RNA methyltransferase RsmG family.

It localises to the cytoplasm. The catalysed reaction is guanosine(527) in 16S rRNA + S-adenosyl-L-methionine = N(7)-methylguanosine(527) in 16S rRNA + S-adenosyl-L-homocysteine. Specifically methylates the N7 position of guanine in position 527 of 16S rRNA. The sequence is that of Ribosomal RNA small subunit methyltransferase G from Pseudomonas fluorescens (strain Pf0-1).